Reading from the N-terminus, the 225-residue chain is NAD(P)H-quinone oxidoreductase subunit K, chloroplastic (225 aa).

Residues cysteine 43, cysteine 44, cysteine 108, and cysteine 139 each coordinate [4Fe-4S] cluster.

The protein belongs to the complex I 20 kDa subunit family. NDH is composed of at least 16 different subunits, 5 of which are encoded in the nucleus. It depends on [4Fe-4S] cluster as a cofactor.

The protein localises to the plastid. It localises to the chloroplast thylakoid membrane. It carries out the reaction a plastoquinone + NADH + (n+1) H(+)(in) = a plastoquinol + NAD(+) + n H(+)(out). The enzyme catalyses a plastoquinone + NADPH + (n+1) H(+)(in) = a plastoquinol + NADP(+) + n H(+)(out). Its function is as follows. NDH shuttles electrons from NAD(P)H:plastoquinone, via FMN and iron-sulfur (Fe-S) centers, to quinones in the photosynthetic chain and possibly in a chloroplast respiratory chain. The immediate electron acceptor for the enzyme in this species is believed to be plastoquinone. Couples the redox reaction to proton translocation, and thus conserves the redox energy in a proton gradient. This Fagopyrum esculentum subsp. ancestrale (Wild buckwheat) protein is NAD(P)H-quinone oxidoreductase subunit K, chloroplastic.